The following is an 845-amino-acid chain: Translation initiation factor IF-2 (845 aa).

Disordered stretches follow at residues 44–91 (KRRK…NLSS) and 119–256 (ARRA…NQEP). Positions 119–129 (ARRAKEREESL) are enriched in basic and acidic residues. Residues 139–148 (DETPQEEEEP) are compositionally biased toward acidic residues. The span at 156-165 (SLSPAQSQIE) shows a compositional bias: polar residues. 2 stretches are compositionally biased toward basic and acidic residues: residues 179–194 (IEKRKADETKEDDRNS) and 202–217 (SEVRAPKVLKGADEKR). A tr-type G domain is found at 343 to 510 (LRPPVVTIMG…AILLQAEILD (168 aa)). The tract at residues 352-359 (GHVDHGKT) is G1. Position 352–359 (352–359 (GHVDHGKT)) interacts with GTP. The interval 377–381 (GITQH) is G2. The segment at 398–401 (DTPG) is G3. Residues 398–402 (DTPGH) and 452–455 (NKID) contribute to the GTP site. A G4 region spans residues 452-455 (NKID). Residues 488-490 (SAK) form a G5 region.

The protein belongs to the TRAFAC class translation factor GTPase superfamily. Classic translation factor GTPase family. IF-2 subfamily.

It localises to the cytoplasm. Its function is as follows. One of the essential components for the initiation of protein synthesis. Protects formylmethionyl-tRNA from spontaneous hydrolysis and promotes its binding to the 30S ribosomal subunits. Also involved in the hydrolysis of GTP during the formation of the 70S ribosomal complex. This is Translation initiation factor IF-2 from Bartonella henselae (strain ATCC 49882 / DSM 28221 / CCUG 30454 / Houston 1) (Rochalimaea henselae).